The sequence spans 238 residues: Glyceraldehyde 3-phosphate phosphatase (238 aa).

The protein belongs to the HAD-like hydrolase superfamily. It depends on Mg(2+) as a cofactor.

Catalyzes the dephosphorylation of D,L-glyceraldehyde 3-phosphate in vitro. The protein is Glyceraldehyde 3-phosphate phosphatase of Pyrococcus abyssi (strain GE5 / Orsay).